The primary structure comprises 115 residues: Large ribosomal subunit protein bL19 (115 aa).

This sequence belongs to the bacterial ribosomal protein bL19 family.

In terms of biological role, this protein is located at the 30S-50S ribosomal subunit interface and may play a role in the structure and function of the aminoacyl-tRNA binding site. This is Large ribosomal subunit protein bL19 from Escherichia coli O139:H28 (strain E24377A / ETEC).